We begin with the raw amino-acid sequence, 521 residues long: GMP synthase [glutamine-hydrolyzing] (521 aa).

The region spanning 10-204 (SLLILDFGSQ…ALGICGCEND (195 aa)) is the Glutamine amidotransferase type-1 domain. The active-site Nucleophile is C87. Residues H178 and E180 contribute to the active site. The GMPS ATP-PPase domain occupies 205-396 (WNMHNFAEEQ…LGMPREMLMR (192 aa)). ATP is bound at residue 232 to 238 (SGGVDSS).

In terms of assembly, homodimer.

The enzyme catalyses XMP + L-glutamine + ATP + H2O = GMP + L-glutamate + AMP + diphosphate + 2 H(+). Its pathway is purine metabolism; GMP biosynthesis; GMP from XMP (L-Gln route): step 1/1. Functionally, catalyzes the synthesis of GMP from XMP. This is GMP synthase [glutamine-hydrolyzing] from Wolinella succinogenes (strain ATCC 29543 / DSM 1740 / CCUG 13145 / JCM 31913 / LMG 7466 / NCTC 11488 / FDC 602W) (Vibrio succinogenes).